We begin with the raw amino-acid sequence, 315 residues long: Glutamine synthetase nodule isozyme (315 aa).

The 81-residue stretch at 19–99 folds into the GS beta-grasp domain; the sequence is IIAEYIWVGG…VICDTYTPSG (81 aa). Residues 106-315 form the GS catalytic domain; the sequence is KRHAAAKIFS…WGVANRGASI (210 aa).

Belongs to the glutamine synthetase family. In terms of assembly, homooctamer.

It is found in the cytoplasm. The enzyme catalyses L-glutamate + NH4(+) + ATP = L-glutamine + ADP + phosphate + H(+). This chain is Glutamine synthetase nodule isozyme, found in Lupinus angustifolius (Narrow-leaved blue lupine).